The sequence spans 286 residues: Thymidylate synthase (286 aa).

DUMP is bound at residue 140–141 (RR). Residue C161 is the Nucleophile of the active site. DUMP-binding positions include 185–188 (RSND), N196, and 226–228 (HIY). D188 contributes to the (6R)-5,10-methylene-5,6,7,8-tetrahydrofolate binding site. Position 285 (A285) interacts with (6R)-5,10-methylene-5,6,7,8-tetrahydrofolate.

This sequence belongs to the thymidylate synthase family. Bacterial-type ThyA subfamily. Homodimer.

It localises to the cytoplasm. The catalysed reaction is dUMP + (6R)-5,10-methylene-5,6,7,8-tetrahydrofolate = 7,8-dihydrofolate + dTMP. It participates in pyrimidine metabolism; dTTP biosynthesis. Functionally, catalyzes the reductive methylation of 2'-deoxyuridine-5'-monophosphate (dUMP) to 2'-deoxythymidine-5'-monophosphate (dTMP) while utilizing 5,10-methylenetetrahydrofolate (mTHF) as the methyl donor and reductant in the reaction, yielding dihydrofolate (DHF) as a by-product. This enzymatic reaction provides an intracellular de novo source of dTMP, an essential precursor for DNA biosynthesis. This is Thymidylate synthase from Streptococcus thermophilus (strain ATCC BAA-491 / LMD-9).